A 909-amino-acid polypeptide reads, in one-letter code: ABC transporter A family member 10 (909 aa).

7 helical membrane-spanning segments follow: residues Val35–Val55, Ile320–Ile340, Phe374–Leu394, Phe406–Ile426, Ala433–Gly453, Gly465–Ala485, and Leu507–Leu527. Ser555 carries the post-translational modification Phosphoserine. The region spanning Ile587 to Thr824 is the ABC transporter domain. Residue Gly625–Thr632 participates in ATP binding.

The protein belongs to the ABC transporter superfamily. ABCA family. CPR flippase (TC 3.A.1.211) subfamily.

It localises to the membrane. The protein is ABC transporter A family member 10 (ABCA10) of Arabidopsis thaliana (Mouse-ear cress).